The sequence spans 211 residues: Protein-L-isoaspartate O-methyltransferase (211 aa).

Serine 62 is a catalytic residue.

Belongs to the methyltransferase superfamily. L-isoaspartyl/D-aspartyl protein methyltransferase family.

The protein localises to the cytoplasm. It catalyses the reaction [protein]-L-isoaspartate + S-adenosyl-L-methionine = [protein]-L-isoaspartate alpha-methyl ester + S-adenosyl-L-homocysteine. Catalyzes the methyl esterification of L-isoaspartyl residues in peptides and proteins that result from spontaneous decomposition of normal L-aspartyl and L-asparaginyl residues. It plays a role in the repair and/or degradation of damaged proteins. The protein is Protein-L-isoaspartate O-methyltransferase of Shewanella sp. (strain MR-4).